Here is a 2290-residue protein sequence, read N- to C-terminus: Autophagy-related protein 2 (2290 aa).

Residues 10 to 99 (WCKVMLQRYM…MCIEDLQLTF (90 aa)) form the Chorein N-terminal domain. Residues 829 to 1549 (DSMMKSVSAD…PNRDHSAFVV (721 aa)) are required for epg-6 binding. Disordered regions lie at residues 1678-1727 (IGSK…LGDL), 1805-1851 (DDLF…DLTG), 1898-1919 (SETE…PARN), and 1967-2003 (EHGN…ERNK). The segment covering 1681-1692 (KKTTPKTSVSSS) has biased composition (low complexity). Residues 1714-1723 (RPSPVQPPTP) are compositionally biased toward pro residues. The segment covering 1810–1830 (QSYSSSSSETESESSAPQSSQ) has biased composition (low complexity). Residues 1972-2011 (LDSIDNEDDNEKQKIEEEMEEDEKEEEEERNKEIQEAVER) adopt a coiled-coil conformation. Over residues 1988–1999 (EEMEEDEKEEEE) the composition is skewed to acidic residues.

Belongs to the ATG2 family. Interacts with epg-6; the interaction is direct.

The protein resides in the preautophagosomal structure membrane. It localises to the lipid droplet. The protein localises to the endoplasmic reticulum membrane. It is found in the cytoplasm. It catalyses the reaction a 1,2-diacyl-sn-glycero-3-phospho-L-serine(in) = a 1,2-diacyl-sn-glycero-3-phospho-L-serine(out). It carries out the reaction a 1,2-diacyl-sn-glycero-3-phosphoethanolamine(in) = a 1,2-diacyl-sn-glycero-3-phosphoethanolamine(out). Its function is as follows. Lipid transfer protein involved in autophagosome assembly and in the distribution of atg-9 and atg-13 during the autophagy-mediated degradation of protein aggregates. Tethers the edge of the isolation membrane (IM) to the endoplasmic reticulum (ER) and mediates direct lipid transfer from ER to IM for IM expansion. Binds to the ER exit site (ERES), which is the membrane source for autophagosome formation, and extracts phospholipids from the membrane source to the IM for membrane expansion. Involved in autophagy-mediated degradation of ribosomal RNA and ribosomal proteins in lysosomes, which is essential for maintaining nucleotide homeostasis. The sequence is that of Autophagy-related protein 2 from Caenorhabditis elegans.